A 1131-amino-acid chain; its full sequence is MPTPVAAARQCLSPAAVPALDAAVASSRRRAHAQTTSLHLISSLLAPPAPPLLRDALARARSAAYSPRVQLKALDLCFAVSLDRLPSVSASSSSSGAADEPPVSNSLMAAIKRSQANQRRNPDTFHFYHQAATAQTPAAVKVELSHLVLAILDDPVVSRVFAEAGFRSGDIKLAILRPAPPMPLLGRLPTRTRPPPLFLCSFAAADDADVPSPAGNLAGAGEENCRRIAEILSRGRNPMLVGVGAASAADDFAAASPYRIIHVDPNTIDRSDLGVAAAMASATSGLIISIGDLKQLVPDEDAEAQEKGRRVVAEVTRVLETHSKVGRVWVMGWSATYETYLAFLSKFPLVDKDWDLQLLPITAVHAAATAGPAAAAAGLMPPATTVAAFSKPAASLMDSFVPFGGFLCDNYEENSLTANSCPQALRCQQCNDKYEQEVATIISASGITAEDHHQGGLPSLLQNGSMMGPNNGFDPVKARDDRMVLNSKILNLRKKWNEYCLRLHQDHQRINRDPYKPFPRYIGVPTDKERSANSSKGSESVGVQKDVIKPCAVSAVHSSSTARPISSPSVTNKRNEDLVLNLQARHSKSDENLQERGMQSQHGTLSNVDNPDDHVSPSSAAPVETDLVLGTPRECSSKGSSSTCSKRVEDSERSVHLVPKKVDDLNLKHPQLSVQPNSCSWSSINVGKTSHSTLHSVASGGFSAFGQWQKRSPLAAQNSDLSNYKLLVERLFKVVGRQEEALSAICESIVRCRSTESRRGPNRNDIWLCFHGSDSMAKKRIAVALAELMHGSKDNLIYLDLNLQDWDDSSFRGKTGIDCIVEQLSKKRQSVLFLDNIDRADCLVQDSLSDAIKSGRFQDMRGKVVDINDSIVVLSRSMIQGSKNGLEEGLSFSEEKILATRGHRLKILVEPGRAITSGCPSGKVVVSPRHFLTKIQASLCSGSISKRKLSISDDQEKLQESPSSSKRLHRTSSVPFDLNLPVDEDEPLDADDDSSSHENSYGNTEKSIDALLHSVDGSINFKPFDFDKLADDMLQEFSNILRKNLGSECMLEIDVGAMEQILAAAWKSEEDRKPVPTWLEQVFARSLDELKLKRKHVSSSTLRLVACEDTVPAVKGDGLGVLLPPRIILDC.

The Clp R domain occupies 8–181; the sequence is ARQCLSPAAV…KLAILRPAPP (174 aa). 2 repeat regions span residues 12-85 and 103-181; these read LSPA…LDRL and VSNS…PAPP. Residues 511–574 form a disordered region; it reads NRDPYKPFPR…ISSPSVTNKR (64 aa). A compositionally biased stretch (low complexity) spans 558-569; that stretch reads SSSTARPISSPS. The EAR 1 motif lies at 578–582; sequence LVLNL. Positions 588 to 655 are disordered; it reads KSDENLQERG…KRVEDSERSV (68 aa). Over residues 597–609 the composition is skewed to polar residues; that stretch reads GMQSQHGTLSNVD. A compositionally biased stretch (basic and acidic residues) spans 646–655; that stretch reads KRVEDSERSV. The EAR 2 signature appears at 799–803; that stretch reads LDLNL. 2 disordered regions span residues 951 to 970 and 976 to 1002; these read ISDD…RLHR and FDLN…NSYG. The EAR 3 motif lies at 976–981; it reads FDLNLP. A compositionally biased stretch (acidic residues) spans 982-993; it reads VDEDEPLDADDD.

This sequence belongs to the ClpA/ClpB family. As to quaternary structure, interacts with D3. Interacts with D14. The interaction with D14 is enhanced in the presence of strigolactones. The interaction with D14 occurs in the presence of (2'R) stereoisomers of strigolactones, but not (2'S) stereoisomers. Interacts with the TOPLESS-related proteins TPR1, TPR2 and TPR3. Interacts with SPL14/IPA1. Polyubiquitinated. Strigolactone, but not karrikin, triggers rapid SCF(D3)-dependent degradation via the proteasome. In terms of tissue distribution, expressed in the shoot bases of seedlings, young leaves, axillary buds and young panicles. Expressed in young roots vasculature, culms, internodes and nodes, preferentially in the parenchyma cells surrounding the xylem.

Its subcellular location is the nucleus. Repressor of strigolactones (SL) signaling. Subjected to a negative feedback control of SL signaling. Suppresses the transcriptional activation activity of SPL14/IPA1 in SL signaling. Acts with SPL14/IPA1 to mediate the SL-regulated tiller development. Subject to a negative feedback regulation by SPL14/IPA1, which binds to D53 promoter to repress D53 gene expression. This chain is Protein DWARF 53, found in Oryza sativa subsp. japonica (Rice).